Consider the following 144-residue polypeptide: Large ribosomal subunit protein uL13 (144 aa).

It belongs to the universal ribosomal protein uL13 family. In terms of assembly, part of the 50S ribosomal subunit.

Functionally, this protein is one of the early assembly proteins of the 50S ribosomal subunit, although it is not seen to bind rRNA by itself. It is important during the early stages of 50S assembly. In Mycoplasma mobile (strain ATCC 43663 / 163K / NCTC 11711) (Mesomycoplasma mobile), this protein is Large ribosomal subunit protein uL13.